The following is a 294-amino-acid chain: Probable WRKY transcription factor 70 (294 aa).

The segment at 72-94 (SQNASCDNDGKFEDSGDSRKRLG) is disordered. Residues 79–91 (NDGKFEDSGDSRK) are compositionally biased toward basic and acidic residues. Positions 90–97 (RKRLGPVK) match the Nuclear localization signal motif. Residues 114–182 (IESTILEDAF…YIGNHTCNTN (69 aa)) constitute a DNA-binding region (WRKY). Residues 201 to 229 (SEDHKSPSLSTSMKEEDNPHRHHGSSTEN) are disordered.

This sequence belongs to the WRKY group III family. In terms of assembly, interacts with WRKY30. Binds to BZR2/BES1 to cooperatively regulate the expression of target genes. Binds to unmodified (i.e. not sumoylated) NPR1. Post-translationally, phosphorylated and destabilized by ASK7/BIN2. As to expression, expressed in leaves and flowers.

It is found in the nucleus. Transcription factor involved in senescence, biotic and abiotic stress responses by modulating various phytohormones signaling pathways. Interacts specifically with the W box (5'-(T)TGAC[CT]-3'), a frequently occurring elicitor-responsive cis-acting element. Binds to the 5'-[CT]GACTTTT-3' motif in promoters of target genes to induce their expression. Binding to the W-box element of PR-1 promoter is mediated by not-sumoylated NPR1 in the absence of salicylic acid. Plays an important but not indispensable role in jasmonate and salicylic acid signaling. Positively regulates the salicylic acid (SA)-mediated signal pathway, but negatively the jasmonic acid (JA)-mediated signal pathway, thus determining the balance between these mutually antagonistic pathways. Together with WRKY46, WRKY53 and WRKY54, prevents defense response to the necrotrophic pathogens P.carotovorum and B.cinerea, but promotes defense responses (including SA-induced pathogenesis-related (PR) genes expression) against biotrophic/hemibiotrophic SA-monitored pathogens (e.g. P.syringae, E.carotovora subsp. carotovora SCC3193 and E.cichoracearum), probably by regulating negatively the JA/ET and positively the SA signaling pathways. Contributes to the suppression of jasmonic acid (MeJA)-induced expression of JA-responsive genes (e.g. PDF1.2). Promotes susceptibility to JA-monitored pathogens (e.g. A.brassicicola), probably by facilitating SA-controlled suppression of JA-mediated defense. Represses the biosynthesis of the phytoalexin camalexin and indol-3-ylmethyl glucosinolate (IGS). Represses both SA and JA/ethylene (ET) mediated defense marker genes expression. Negative regulator of SA biosynthesis. Negative regulator of EDS1-dependent defense against E.amylovora. Required for RPP4-mediated disease resistance and basal defense against H.parasitica, probably via late up-regulation (LURP) of resistance genes (e.g. CML10/CaBP22 and LURP1). Probably involved in defense responses toward insects (e.g. P.xylostella and B.brassicae). Together with WRKY54, negative regulator of developmental senescence, probably via the regulation of several senescence-associated markers genes. Together with WRKY46 and WRKY54, promotes brassinosteroid (BR)-regulated plant growth but prevent drought response by modulating gene expression. In collaboration with WRKY54, prevents stomatal closure and, consequently, osmotic stress tolerance. Regulates rhizobacterium B.cereus AR156-induced systemic resistance (ISR) to P.syringae pv. tomato DC3000. The chain is Probable WRKY transcription factor 70 from Arabidopsis thaliana (Mouse-ear cress).